A 173-amino-acid chain; its full sequence is Small ribosomal subunit protein mS25 (173 aa).

The protein belongs to the mitochondrion-specific ribosomal protein mS25 family. In terms of assembly, component of the mitochondrial ribosome small subunit (28S) which comprises a 12S rRNA and about 30 distinct proteins.

The protein localises to the mitochondrion. In Bos taurus (Bovine), this protein is Small ribosomal subunit protein mS25 (MRPS25).